The sequence spans 551 residues: Prunin 1 Pru du 6 (551 aa).

A signal peptide spans 1 to 20; that stretch reads MAKAFVFSLCLLLVFNGCLA. 2 disulfide bridges follow: Cys32/Cys65 and Cys108/Cys374. The region spanning 37 to 312 is the Cupin type-1 1 domain; that stretch reads LQAREPDNRI…ALNVNEETAR (276 aa). Disordered regions lie at residues 111 to 194, 238 to 293, and 329 to 360; these read TFEE…QKTR, NPRK…NVFS, and GNLD…RQQQ. Low complexity-rich tracts occupy residues 114–124, 132–148, and 168–185; these read ESQQSSQQGRQ, QQQQ…QQEQ, and QEQQ…QQFR. Arg194 serves as a coordination point for Ca(2+). A compositionally biased stretch (low complexity) spans 254 to 275; that stretch reads QQGQSQPRQQGEQGRPGQHQQP. Polar residues predominate over residues 282-293; that stretch reads QEQQGNGNNVFS. Residues 339 to 350 are compositionally biased toward basic and acidic residues; sequence GRQEREHEERQQ. Over residues 351–360 the composition is skewed to low complexity; that stretch reads EQLQQERQQQ. The NGXEET; peptidase recognition motif motif lies at 367–372; sequence NGLEET. Residues 380–529 form the Cupin type-1 2 domain; it reads ENIGNPERAD…AYQISREQAR (150 aa).

This sequence belongs to the 11S seed storage protein (globulins) family. Hexamer of two trimers; each subunit is composed of an acidic and a basic chain derived from a single precursor and linked by a disulfide bond. In terms of processing, proteolytically processed from a single precursor to produce an acidic and a basic chain that are linked by a disulfide bond. As to expression, expressed in seed (at protein level). Expressed in seed.

Seed storage protein. The sequence is that of Prunin 1 Pru du 6 from Prunus dulcis (Almond).